A 235-amino-acid chain; its full sequence is Derlin-3 (235 aa).

The Cytoplasmic portion of the chain corresponds to 1-22 (MAWQGLAAEFLQVPAVTRAYTA). The helical transmembrane segment at 23 to 43 (ACVLTTAAVQLELLSPFQLYF) threads the bilayer. Residues 44 to 58 (NPHLVFRKFQVWRLV) lie on the Lumenal side of the membrane. A helical membrane pass occupies residues 59-79 (TNFLFFGPLGFSFFFNMLFVF). At 80-98 (RYCRMLEEGSFRGRTADFV) the chain is on the cytoplasmic side. Residues 99–119 (FMFLFGGVLMTLLGLLGSLFF) traverse the membrane as a helical segment. At 120–157 (LGQALMAMLVYVWSRRSPRVRVNFFGLLTFQAPFLPWA) the chain is on the lumenal side. The helical transmembrane segment at 158 to 178 (LMGFSLLLGNSILVDLLGIAV) threads the bilayer. The Cytoplasmic segment spans residues 179–235 (GHIYYFLEDVFPNQPGGKRLLQTPGFLKLLLDAPAEDPNYLPLPEEQPGPHLPPPQQ). The disordered stretch occupies residues 216-235 (PNYLPLPEEQPGPHLPPPQQ). A compositionally biased stretch (pro residues) spans 223–235 (EEQPGPHLPPPQQ).

The protein belongs to the derlin family. In terms of assembly, forms homo- and heterooligomers with DERL2 and, to a lesser extent, with DERL1. Interacts with VCP and EDEM1. Interacts with SELENOK and SELENOS. Interacts with the signal recognition particle/SRP and the SRP receptor; in the process of endoplasmic reticulum stress-induced pre-emptive quality control. Unlike DERL1 and DERL2, restricted to several tissues. Expressed at high levels in placenta, pancreas, spleen and small intestine.

Its subcellular location is the endoplasmic reticulum membrane. Functional component of endoplasmic reticulum-associated degradation (ERAD) for misfolded lumenal glycoproteins, but not that of misfolded nonglycoproteins. May act by forming a channel that allows the retrotranslocation of misfolded glycoproteins into the cytosol where they are ubiquitinated and degraded by the proteasome. May mediate the interaction between VCP and the misfolded glycoproteins. May be involved in endoplasmic reticulum stress-induced pre-emptive quality control, a mechanism that selectively attenuates the translocation of newly synthesized proteins into the endoplasmic reticulum and reroutes them to the cytosol for proteasomal degradation. The chain is Derlin-3 from Homo sapiens (Human).